A 210-amino-acid polypeptide reads, in one-letter code: Na(+)-translocating NADH-quinone reductase subunit D (210 aa).

6 helical membrane passes run proline 14 to valine 34, leucine 42 to isoleucine 62, isoleucine 72 to alanine 92, valine 103 to methionine 123, phenylalanine 131 to valine 151, and asparagine 178 to isoleucine 198.

The protein belongs to the NqrDE/RnfAE family. Composed of six subunits; NqrA, NqrB, NqrC, NqrD, NqrE and NqrF.

The protein localises to the cell inner membrane. It catalyses the reaction a ubiquinone + n Na(+)(in) + NADH + H(+) = a ubiquinol + n Na(+)(out) + NAD(+). Functionally, NQR complex catalyzes the reduction of ubiquinone-1 to ubiquinol by two successive reactions, coupled with the transport of Na(+) ions from the cytoplasm to the periplasm. NqrA to NqrE are probably involved in the second step, the conversion of ubisemiquinone to ubiquinol. The sequence is that of Na(+)-translocating NADH-quinone reductase subunit D from Shewanella loihica (strain ATCC BAA-1088 / PV-4).